The following is a 179-amino-acid chain: Ribulose bisphosphate carboxylase small subunit, chloroplastic 5 (179 aa).

The N-terminal 58 residues, Met1–Gln58, are a transit peptide targeting the chloroplast.

Belongs to the RuBisCO small chain family. Heterohexadecamer of 8 large and 8 small subunits.

The protein localises to the plastid. It localises to the chloroplast. Functionally, ruBisCO catalyzes two reactions: the carboxylation of D-ribulose 1,5-bisphosphate, the primary event in carbon dioxide fixation, as well as the oxidative fragmentation of the pentose substrate. Both reactions occur simultaneously and in competition at the same active site. Although the small subunit is not catalytic it is essential for maximal activity. The chain is Ribulose bisphosphate carboxylase small subunit, chloroplastic 5 from Fritillaria agrestis (Stinkbells).